Reading from the N-terminus, the 353-residue chain is Protein RecA (353 aa).

Residue 75-82 coordinates ATP; sequence GPESSGKT.

This sequence belongs to the RecA family.

It localises to the cytoplasm. Its function is as follows. Can catalyze the hydrolysis of ATP in the presence of single-stranded DNA, the ATP-dependent uptake of single-stranded DNA by duplex DNA, and the ATP-dependent hybridization of homologous single-stranded DNAs. It interacts with LexA causing its activation and leading to its autocatalytic cleavage. The chain is Protein RecA from Cupriavidus pinatubonensis (strain JMP 134 / LMG 1197) (Cupriavidus necator (strain JMP 134)).